A 386-amino-acid chain; its full sequence is 3-ketoacyl-CoA thiolase (386 aa).

Cys91 serves as the catalytic Acyl-thioester intermediate. Catalysis depends on proton acceptor residues His342 and Cys372.

The protein belongs to the thiolase-like superfamily. Thiolase family. Heterotetramer of two alpha chains (FadB) and two beta chains (FadA).

It localises to the cytoplasm. The catalysed reaction is an acyl-CoA + acetyl-CoA = a 3-oxoacyl-CoA + CoA. It functions in the pathway lipid metabolism; fatty acid beta-oxidation. Its function is as follows. Catalyzes the final step of fatty acid oxidation in which acetyl-CoA is released and the CoA ester of a fatty acid two carbons shorter is formed. This chain is 3-ketoacyl-CoA thiolase, found in Colwellia psychrerythraea (strain 34H / ATCC BAA-681) (Vibrio psychroerythus).